The sequence spans 243 residues: HTH-type transcriptional repressor NagR (243 aa).

The HTH gntR-type domain maps to 9–77 (IPIYYQIMEQ…KGRGTFVSKP (69 aa)). Positions 37-56 (EREYAEQFGISRMTVRQALS) form a DNA-binding region, H-T-H motif. Alpha-D-glucosamine 6-phosphate is bound by residues 89–90 (FT), 133–135 (RVR), E145, 165–167 (SIY), E222, and Y228. N-acetyl-D-glucosamine 6-phosphate-binding positions include 89–90 (FT), 133–135 (RVR), E145, 165–167 (SIY), E222, and Y228.

In terms of assembly, homodimer. Forms dimers via the C-terminal effector-binding domain. At high concentrations, probably forms polymers along the DNA.

With respect to regulation, binding to DNA is allosterically inhibited by an effector molecule. Binding of the effector to the C-terminal domain leads to a conformational change that modulates binding to DNA and thereby regulates transcription of the target genes. Glucosamine-6-phosphate (GlcN6P) and/or N-acetylglucosamine-6-phosphate (GlcNAc6P) are putative effectors of NagR. Binding of GlcNAc6P may prevent the protein-protein interactions responsible for polymerization along the DNA, but not the specific DNA binding. Its function is as follows. Main transcriptional repressor of genes involved in N-acetylglucosamine (GlcNAc) transport and utilization. Represses the expression of the nagAB and nagP operons by binding directly within their upstream regions. Binds to the DNA consensus sequence 5'-ATTGGTATAGACAACT-3'. Also acts as a weak repressor of mapB expression. This is HTH-type transcriptional repressor NagR from Bacillus subtilis (strain 168).